The chain runs to 353 residues: Probable dual-specificity RNA methyltransferase RlmN (353 aa).

E90 serves as the catalytic Proton acceptor. Residues 96–326 (YKHGNSICIS…VTTRREMGSD (231 aa)) enclose the Radical SAM core domain. Residues C103 and C331 are joined by a disulfide bond. Positions 110, 114, and 117 each coordinate [4Fe-4S] cluster. S-adenosyl-L-methionine is bound by residues 157–158 (GE), S189, 212–214 (SLH), and N288. The S-methylcysteine intermediate role is filled by C331.

The protein belongs to the radical SAM superfamily. RlmN family. The cofactor is [4Fe-4S] cluster.

It is found in the cytoplasm. It catalyses the reaction adenosine(2503) in 23S rRNA + 2 reduced [2Fe-2S]-[ferredoxin] + 2 S-adenosyl-L-methionine = 2-methyladenosine(2503) in 23S rRNA + 5'-deoxyadenosine + L-methionine + 2 oxidized [2Fe-2S]-[ferredoxin] + S-adenosyl-L-homocysteine. The enzyme catalyses adenosine(37) in tRNA + 2 reduced [2Fe-2S]-[ferredoxin] + 2 S-adenosyl-L-methionine = 2-methyladenosine(37) in tRNA + 5'-deoxyadenosine + L-methionine + 2 oxidized [2Fe-2S]-[ferredoxin] + S-adenosyl-L-homocysteine. Its function is as follows. Specifically methylates position 2 of adenine 2503 in 23S rRNA and position 2 of adenine 37 in tRNAs. In Clostridium beijerinckii (strain ATCC 51743 / NCIMB 8052) (Clostridium acetobutylicum), this protein is Probable dual-specificity RNA methyltransferase RlmN.